The sequence spans 168 residues: G/U mismatch-specific DNA glycosylase (168 aa).

The protein belongs to the uracil-DNA glycosylase (UDG) superfamily. TDG/mug family. Binds DNA as a monomer.

The protein localises to the cytoplasm. It catalyses the reaction Specifically hydrolyzes mismatched double-stranded DNA and polynucleotides, releasing free uracil.. Its function is as follows. Excises ethenocytosine and uracil, which can arise by alkylation or deamination of cytosine, respectively, from the corresponding mispairs with guanine in ds-DNA. It is capable of hydrolyzing the carbon-nitrogen bond between the sugar-phosphate backbone of the DNA and the mispaired base. The complementary strand guanine functions in substrate recognition. Required for DNA damage lesion repair in stationary-phase cells. This is G/U mismatch-specific DNA glycosylase from Cronobacter sakazakii (strain ATCC BAA-894) (Enterobacter sakazakii).